A 144-amino-acid polypeptide reads, in one-letter code: Methylglyoxal synthase (144 aa).

Residues 1 to 144 (MKIALIAHDE…KSGEEKETER (144 aa)) enclose the MGS-like domain. Residues H8, K12, 34 to 37 (TGTT), and 54 to 55 (SG) contribute to the substrate site. D60 functions as the Proton donor/acceptor in the catalytic mechanism. Residue H87 coordinates substrate.

This sequence belongs to the methylglyoxal synthase family.

It catalyses the reaction dihydroxyacetone phosphate = methylglyoxal + phosphate. Functionally, catalyzes the formation of methylglyoxal from dihydroxyacetone phosphate. The polypeptide is Methylglyoxal synthase (Geobacillus thermodenitrificans (strain NG80-2)).